A 481-amino-acid polypeptide reads, in one-letter code: ATP synthase subunit beta, plastid (481 aa).

162–169 is an ATP binding site; it reads GGAGVGKT.

Belongs to the ATPase alpha/beta chains family. As to quaternary structure, F-type ATPases have 2 components, CF(1) - the catalytic core - and CF(0) - the membrane proton channel. CF(1) has five subunits: alpha(3), beta(3), gamma(1), delta(1), epsilon(1). CF(0) has four main subunits: a(1), b(1), b'(1) and c(9-12).

The protein resides in the plastid membrane. The enzyme catalyses ATP + H2O + 4 H(+)(in) = ADP + phosphate + 5 H(+)(out). Functionally, produces ATP from ADP in the presence of a proton gradient across the membrane. The catalytic sites are hosted primarily by the beta subunits. The sequence is that of ATP synthase subunit beta, plastid (atpB) from Prototheca wickerhamii.